A 470-amino-acid polypeptide reads, in one-letter code: Argininosuccinate lyase (470 aa).

It belongs to the lyase 1 family. Argininosuccinate lyase subfamily.

Its subcellular location is the cytoplasm. The enzyme catalyses 2-(N(omega)-L-arginino)succinate = fumarate + L-arginine. It functions in the pathway amino-acid biosynthesis; L-arginine biosynthesis; L-arginine from L-ornithine and carbamoyl phosphate: step 3/3. This Prochlorococcus marinus (strain MIT 9303) protein is Argininosuccinate lyase.